Here is a 638-residue protein sequence, read N- to C-terminus: Octopamine receptor 1 (638 aa).

At Met1–Asp28 the chain is on the extracellular side. A helical membrane pass occupies residues Val29–Val53. Over Ala54–Asn64 the chain is Cytoplasmic. The chain crosses the membrane as a helical span at residues Val65–Val87. The Extracellular segment spans residues Asn88–Gln102. An intrachain disulfide couples Cys101 to Cys230. The chain crosses the membrane as a helical span at residues Val103–Leu124. Residues Asp125–Thr147 lie on the Cytoplasmic side of the membrane. A helical transmembrane segment spans residues Leu148–Trp167. Over Asn168 to Arg239 the chain is Extracellular. 3 N-linked (GlcNAc...) asparagine glycosylation sites follow: Asn178, Asn207, and Asn215. The helical transmembrane segment at Ile240–Leu259 threads the bilayer. The Cytoplasmic portion of the chain corresponds to Gln260–Thr520. A helical membrane pass occupies residues Leu521 to Cys545. The Extracellular segment spans residues Glu546 to Pro551. Residues Ile552–Phe575 form a helical membrane-spanning segment. The Cytoplasmic portion of the chain corresponds to Ser576 to Thr638. The segment at Asp618–Thr638 is disordered.

Belongs to the G-protein coupled receptor 1 family. In terms of tissue distribution, expressed in the central nervous system.

Its subcellular location is the cell membrane. G-protein coupled receptor for octopamine (OA), which is a neurotransmitter, neurohormone, and neuromodulator in invertebrates. Activation of this receptor by octopamine induces an increase in both inositol phosphates and cyclic AMP. The coupling to adenylyl cyclase seems to be less efficient than the coupling to phospholipase C. The rank order of potency for agonists is p-synephrine &gt;= clonidine &gt; p-octopamine = xylometazoline = phenylephrine = oxymetazoline &gt; B-HT920 &gt; serotonin = p-tyramine &gt; epinephrine &gt; norepinephrine &gt; methoxamine = dopamine = histamine. For antagonists, the rank order is yohimbine &gt; chlopromazine / spiperone &gt; phentolamine &gt; mianserine &gt; rauwolscine &gt; prazosin &gt; alprenolol / propanolol &gt; pindolol. The protein is Octopamine receptor 1 of Lymnaea stagnalis (Great pond snail).